The primary structure comprises 1297 residues: Phosphoribosylformylglycinamidine synthase (1297 aa).

A disordered region spans residues 301-329 (TAISPFPGAATGSGGEIRDEGATGRGAKP). Position 308-319 (308-319 (GAATGSGGEIRD)) interacts with ATP. The Mg(2+) site is built by Asp-680, Glu-719, Asn-723, and Asp-887. Residue Ser-889 coordinates ATP. Residues 1045–1297 (IAILREQGVN…RLFRNARMVF (253 aa)) enclose the Glutamine amidotransferase type-1 domain. The Nucleophile role is filled by Cys-1138. Residues His-1263 and Glu-1265 contribute to the active site.

The protein in the N-terminal section; belongs to the FGAMS family. As to quaternary structure, monomer.

It is found in the cytoplasm. The enzyme catalyses N(2)-formyl-N(1)-(5-phospho-beta-D-ribosyl)glycinamide + L-glutamine + ATP + H2O = 2-formamido-N(1)-(5-O-phospho-beta-D-ribosyl)acetamidine + L-glutamate + ADP + phosphate + H(+). It functions in the pathway purine metabolism; IMP biosynthesis via de novo pathway; 5-amino-1-(5-phospho-D-ribosyl)imidazole from N(2)-formyl-N(1)-(5-phospho-D-ribosyl)glycinamide: step 1/2. Its function is as follows. Phosphoribosylformylglycinamidine synthase involved in the purines biosynthetic pathway. Catalyzes the ATP-dependent conversion of formylglycinamide ribonucleotide (FGAR) and glutamine to yield formylglycinamidine ribonucleotide (FGAM) and glutamate. The protein is Phosphoribosylformylglycinamidine synthase of Haemophilus influenzae (strain ATCC 51907 / DSM 11121 / KW20 / Rd).